Here is an 85-residue protein sequence, read N- to C-terminus: Beta-toxin BmKAS (85 aa).

The signal sequence occupies residues 1–19; it reads MKTVIFLIVSSLLLIGVKT. An LCN-type CS-alpha/beta domain is found at 20–82; sequence DNGYLLDKYT…LWNYNTNKCN (63 aa). Intrachain disulfides connect Cys-31/Cys-81, Cys-35/Cys-56, Cys-42/Cys-63, and Cys-46/Cys-65.

Expressed by the venom gland.

It localises to the secreted. Beta toxins bind voltage-independently at site-4 of sodium channels (Nav) and shift the voltage of activation toward more negative potentials thereby affecting sodium channel activation and promoting spontaneous and repetitive firing. It binds to distinct receptor sites of mammal and insect voltage-gated sodium channels. It displays antinociceptive effect in rat models, which is due to its specific modulation of sodium channels of sensory neurons. It also significantly stimulates the binding of [3H]-ryanodine to ryanodine receptors on the sarcoplasmic reticulum of the skeletal muscle through an indirect mechanism. And it promotes noradrenaline release from the rat hippocampus slice. The polypeptide is Beta-toxin BmKAS (Olivierus martensii (Manchurian scorpion)).